Consider the following 70-residue polypeptide: MIIPWQDIAPETLENLIREFVLREGTDYGAIEISLQNKIDQVKTQLEKGEAVIVFSELHETVDIQLKAKF.

The protein belongs to the UPF0270 family.

The polypeptide is UPF0270 protein VP2791 (Vibrio parahaemolyticus serotype O3:K6 (strain RIMD 2210633)).